The following is a 429-amino-acid chain: Maltoporin 2 (429 aa).

A signal peptide spans 1 to 25 (MMITLRKLPLAVAVAAGVMSAQALA). The span at 397–412 (GLQTKDSSGSGAFTSS) shows a compositional bias: polar residues. The segment at 397 to 416 (GLQTKDSSGSGAFTSSRGDD) is disordered.

It belongs to the porin LamB (TC 1.B.3) family. Homotrimer formed of three 18-stranded antiparallel beta-barrels, containing three independent channels.

The protein resides in the cell outer membrane. It catalyses the reaction beta-maltose(in) = beta-maltose(out). Functionally, involved in the transport of maltose and maltodextrins. The sequence is that of Maltoporin 2 from Klebsiella pneumoniae subsp. pneumoniae (strain ATCC 700721 / MGH 78578).